The chain runs to 425 residues: GTPase Obg (425 aa).

Residues 1–158 (MFVDQVKVYV…RYIVMELKLI (158 aa)) enclose the Obg domain. The segment at 118–144 (KGGRGGRGNNRFANSSNPAPHISENGE) is disordered. One can recognise an OBG-type G domain in the interval 159 to 327 (ADVGLVGYPS…LMYAIGDTLA (169 aa)). ATP is bound by residues 165–172 (GYPSVGKS), 190–194 (FTTLT), 211–214 (DLPG), 281–284 (NKME), and 308–310 (SAA). Residues Ser172 and Thr192 each coordinate Mg(2+). The OCT domain maps to 348–425 (RAEKEPDAFE…IGKLEFDFVE (78 aa)).

This sequence belongs to the TRAFAC class OBG-HflX-like GTPase superfamily. OBG GTPase family. As to quaternary structure, monomer. Mg(2+) serves as cofactor.

It is found in the cytoplasm. Its function is as follows. An essential GTPase which binds GTP, GDP and possibly (p)ppGpp with moderate affinity, with high nucleotide exchange rates and a fairly low GTP hydrolysis rate. Plays a role in control of the cell cycle, stress response, ribosome biogenesis and in those bacteria that undergo differentiation, in morphogenesis control. In Brevibacillus brevis (strain 47 / JCM 6285 / NBRC 100599), this protein is GTPase Obg.